Reading from the N-terminus, the 268-residue chain is Microtubule-associated protein RP/EB family member 1 (268 aa).

N-acetylalanine is present on Ala-2. Residues 14–116 enclose the Calponin-homology (CH) domain; that stretch reads NLSRHDMLAW…FVQWFKKFFD (103 aa). Lys-66 is subject to N6-crotonyllysine. Tyr-124 bears the Phosphotyrosine mark. Residues 124-268 form an interaction with MTUS2/TIP150 region; it reads YDPVAARQGQ…GGPQEEQEEY (145 aa). The disordered stretch occupies residues 146–180; the sequence is LSKPKKPLGSSTAAPQRPIATQRTTAAPKAGPGMV. Over residues 154 to 170 the composition is skewed to polar residues; it reads GSSTAAPQRPIATQRTT. Ser-155 carries the post-translational modification Phosphoserine. The EB1 C-terminal domain maps to 185-255; it reads GVGNGDDEAA…LYATDEGFVI (71 aa). The tract at residues 206-211 is interaction with APC; the sequence is TVEDLE. Residues 208–268 form a DCTN1-binding region; sequence EDLEKERDFY…GGPQEEQEEY (61 aa). The residue at position 220 (Lys-220) is an N6-acetyllysine. An APC-binding region spans residues 220-242; the sequence is KLRNIELICQENEGENDPVLQRI. Residues 232–255 form an interaction with SKA1 region; that stretch reads EGENDPVLQRIVDILYATDEGFVI.

It belongs to the MAPRE family. In terms of assembly, homodimer. Heterodimer with MAPRE3. Interacts (via C-terminal residues 206-211) with APC (via C-terminal residues 2674-2845); the interaction inhibits association with and bundling of F-actin. Interacts with DCTN1, DIAPH1 and DIAPH2. Interacts with DCTN2, TERF1 and dynein intermediate chain. Interacts with CLASP2, DST, KIF2C and STIM1; probably required for their targeting to the growing microtubule plus ends. Interacts with MTUS2; interaction is direct and probably targets MTUS2 to microtubules. Interacts (via C-terminus) with SKA1 (via SXIP motif); the interaction is direct and stabilizes the kinetochore-microtubule attachment of the SKA1 complex. Interacts with APC2. Interacts with CLASP1. Interacts (via C-terminus) with CLIP1. Interacts with SLAIN2 and SLAIN1. Interacts with MACF1. Interacts with KIF18B; this interaction is required for efficient accumulation of KIF18B at microtubule plus ends. Interacts with MISP. Interacts with RABL2/RABL2A; binds preferentially to GTP-bound RABL2. Interacts with KCNAB2. Interacts with KNSTRN. Interacts with NCKAP5L. Interacts with AKAP9. Interacts with PDE4DIP isoform 2/MMG8/SMYLE; this interaction is required for its recruitment to the Golgi apparatus. May form a pericentrosomal complex with AKAP9, CDK5RAP2 and PDE4DIP isoform 2/MMG8/SMYLE; within this complex, MAPRE1 binding to CDK5RAP2 may be mediated by PDE4DIP. Contrary to other mammalian species, does not interact with CDK5RAP2, possibly due to the lack of conservation of the MAPRE1-binding motif in mouse CDK5RAP2. Interacts with AKNA. Interacts with GAS2L1, GAS2L2, and GAS2L3. Interacts with RARRES1 and AGBL2. Acetylation at Lys-220 by KAT2B/PCAF promotes dynamic kinetochore-microtubule interactions in early mitosis. In terms of processing, crotonylated by KAT5 during mitosis, promoting astral microtubule plasticity and dynamic connection between astral microtubules and the cortex during mitotic chromosome segregation, thereby ensuring accurate spindle positioning in mitosis. Decrotonylated by HDAC3. As to expression, expressed within the midpiece of sperm tail (at protein level).

Its subcellular location is the cytoplasm. The protein resides in the cytoskeleton. It is found in the microtubule organizing center. It localises to the centrosome. The protein localises to the spindle. Its subcellular location is the spindle pole. Functionally, plus-end tracking protein (+TIP) that binds to the plus-end of microtubules and regulates the dynamics of the microtubule cytoskeleton. Recruits other +TIP proteins to microtubules by binding to a conserved Ser-X-Leu-Pro (SXLP) motif in their polypeptide chains. Promotes cytoplasmic microtubule nucleation and elongation. Involved in mitotic spindle positioning by stabilizing microtubules and promoting dynamic connection between astral microtubules and the cortex during mitotic chromosome segregation. Assists chromosome alignment in metaphase by recruiting the SKA complex to the spindle and stabilizing its interactions with microtubule bundles (K-fibers). Also acts as a regulator of minus-end microtubule organization: interacts with the complex formed by AKAP9 and PDE4DIP, leading to recruit CAMSAP2 to the Golgi apparatus, thereby tethering non-centrosomal minus-end microtubules to the Golgi, an important step for polarized cell movement. Promotes elongation of CAMSAP2-decorated microtubule stretches on the minus-end of microtubules. Acts as a regulator of autophagosome transport via interaction with CAMSAP2. Functions downstream of Rho GTPases and DIAPH1 in stable microtubule formation. May play a role in cell migration. This is Microtubule-associated protein RP/EB family member 1 (Mapre1) from Mus musculus (Mouse).